The sequence spans 42 residues: Delta-hexatoxin-Hv1a (42 aa).

Disulfide bonds link C1–C15, C8–C20, C14–C31, and C16–C42.

This sequence belongs to the neurotoxin 06 (delta-actx) family. As to expression, expressed by the venom gland.

The protein localises to the secreted. In terms of biological role, inhibits tetrodotoxin-sensitive voltage-gated sodium channels (Nav) by binding to site 3. Slows the inactivation, and causes a prolongation of action potential duration resulting in repetitive firing in autonomic and motor nerve fibers. Does not depolarize the resting potential. Does not affect tetrodotoxin-resistant sodium channels. This lethal neurotoxin is active on both insect and mammalian voltage-gated sodium channels. Pan-neuronal expression in Drosophila is lethal but flies engineered to express the toxin only in pacemaker neurons have profound defects in circadian rhythm but a normal lifespan. The chain is Delta-hexatoxin-Hv1a from Hadronyche versuta (Blue mountains funnel-web spider).